The sequence spans 232 residues: (S)-2-haloacid dehalogenase (232 aa).

Aspartate 10 (nucleophile) is an active-site residue. An (S)-2-haloacid-binding positions include 11–12 (LY), arginine 41, and 118–119 (SN). Positions 175 to 180 (SSNAWD) are important for catalytic activity.

It belongs to the HAD-like hydrolase superfamily. S-2-haloalkanoic acid dehalogenase family. In terms of assembly, homodimer.

The catalysed reaction is an (S)-2-haloacid + H2O = a (2R)-2-hydroxycarboxylate + a halide anion + H(+). It catalyses the reaction (S)-2-chloropropanoate + H2O = (R)-lactate + chloride + H(+). Its function is as follows. Catalyzes the hydrolytic dehalogenation of small (S)-2-haloalkanoic acids to yield the corresponding (R)-2-hydroxyalkanoic acids. Acts on acids of short chain lengths, C(2) to C(4), with inversion of configuration at C-2. Active with 2-halogenated carboxylic acids and converts only the S-isomer (or L-isomer) of 2-chloropropionic acid with inversion of configuration to produce R-lactate (or D-isomer). The protein is (S)-2-haloacid dehalogenase of Pseudomonas sp. (strain YL).